Here is a 187-residue protein sequence, read N- to C-terminus: Elongation factor P (187 aa).

This sequence belongs to the elongation factor P family.

It is found in the cytoplasm. It functions in the pathway protein biosynthesis; polypeptide chain elongation. In terms of biological role, involved in peptide bond synthesis. Stimulates efficient translation and peptide-bond synthesis on native or reconstituted 70S ribosomes in vitro. Probably functions indirectly by altering the affinity of the ribosome for aminoacyl-tRNA, thus increasing their reactivity as acceptors for peptidyl transferase. The polypeptide is Elongation factor P (Granulibacter bethesdensis (strain ATCC BAA-1260 / CGDNIH1)).